The sequence spans 421 residues: Subtilisin-like protease 2 (421 aa).

The first 16 residues, 1 to 16 (MQLLNFGLLLLPFVAG), serve as a signal peptide directing secretion. A propeptide spanning residues 17 to 122 (DLAPQPEPLL…VHPDQHVYLA (106 aa)) is cleaved from the precursor. In terms of domain architecture, Inhibitor I9 spans 36-122 (QYIVTLKEGL…VHPDQHVYLA (87 aa)). Residues 131–421 (RWGLGYMSSK…ERKFTLPKYY (291 aa)) form the Peptidase S8 domain. Active-site charge relay system residues include D169 and H201. N-linked (GlcNAc...) asparagine glycosylation is found at N248, N261, and N348. S357 serves as the catalytic Charge relay system. An N-linked (GlcNAc...) asparagine glycan is attached at N388.

It belongs to the peptidase S8 family.

It is found in the secreted. In terms of biological role, secreted subtilisin-like serine protease with keratinolytic activity that contributes to pathogenicity. This chain is Subtilisin-like protease 2 (SUB2), found in Arthroderma benhamiae (strain ATCC MYA-4681 / CBS 112371) (Trichophyton mentagrophytes).